The sequence spans 415 residues: Histidine--tRNA ligase (415 aa).

This sequence belongs to the class-II aminoacyl-tRNA synthetase family. As to quaternary structure, homodimer.

It is found in the cytoplasm. It catalyses the reaction tRNA(His) + L-histidine + ATP = L-histidyl-tRNA(His) + AMP + diphosphate + H(+). The sequence is that of Histidine--tRNA ligase from Gluconacetobacter diazotrophicus (strain ATCC 49037 / DSM 5601 / CCUG 37298 / CIP 103539 / LMG 7603 / PAl5).